Consider the following 40-residue polypeptide: uncharacterized protein (40 aa).

The chain crosses the membrane as a helical span at residues 20–37; the sequence is TYLYWTAVTAAYLTYLTI.

It localises to the membrane. This is an uncharacterized protein from Archaeoglobus fulgidus (strain ATCC 49558 / DSM 4304 / JCM 9628 / NBRC 100126 / VC-16).